The sequence spans 448 residues: Exodeoxyribonuclease 7 large subunit (448 aa).

The protein belongs to the XseA family. In terms of assembly, heterooligomer composed of large and small subunits.

It is found in the cytoplasm. The catalysed reaction is Exonucleolytic cleavage in either 5'- to 3'- or 3'- to 5'-direction to yield nucleoside 5'-phosphates.. In terms of biological role, bidirectionally degrades single-stranded DNA into large acid-insoluble oligonucleotides, which are then degraded further into small acid-soluble oligonucleotides. The protein is Exodeoxyribonuclease 7 large subunit of Alcanivorax borkumensis (strain ATCC 700651 / DSM 11573 / NCIMB 13689 / SK2).